The chain runs to 59 residues: MDVKRVKQILSSSSRIDVTYEGVPVWIESCDEQKGSAQVYDVSNPGESVHVDVTALEEK.

This sequence belongs to the SspH family.

The protein localises to the spore core. In Bacillus cereus (strain ATCC 14579 / DSM 31 / CCUG 7414 / JCM 2152 / NBRC 15305 / NCIMB 9373 / NCTC 2599 / NRRL B-3711), this protein is Small, acid-soluble spore protein H 1 (sspH1).